A 376-amino-acid polypeptide reads, in one-letter code: Lipoyl synthase 2, mitochondrial (376 aa).

Positions 109, 114, 120, 140, 144, 147, and 356 each coordinate [4Fe-4S] cluster. Positions 125–345 (ETGTATATIM…QTLGMEMGFR (221 aa)) constitute a Radical SAM core domain.

This sequence belongs to the radical SAM superfamily. Lipoyl synthase family. [4Fe-4S] cluster is required as a cofactor.

The protein localises to the mitochondrion. It carries out the reaction [[Fe-S] cluster scaffold protein carrying a second [4Fe-4S](2+) cluster] + N(6)-octanoyl-L-lysyl-[protein] + 2 oxidized [2Fe-2S]-[ferredoxin] + 2 S-adenosyl-L-methionine + 4 H(+) = [[Fe-S] cluster scaffold protein] + N(6)-[(R)-dihydrolipoyl]-L-lysyl-[protein] + 4 Fe(3+) + 2 hydrogen sulfide + 2 5'-deoxyadenosine + 2 L-methionine + 2 reduced [2Fe-2S]-[ferredoxin]. It participates in protein modification; protein lipoylation via endogenous pathway; protein N(6)-(lipoyl)lysine from octanoyl-[acyl-carrier-protein]: step 2/2. Its function is as follows. Catalyzes the radical-mediated insertion of two sulfur atoms into the C-6 and C-8 positions of the octanoyl moiety bound to the lipoyl domains of lipoate-dependent enzymes, thereby converting the octanoylated domains into lipoylated derivatives. The sequence is that of Lipoyl synthase 2, mitochondrial from Pisum sativum (Garden pea).